Reading from the N-terminus, the 1222-residue chain is Protein SCP160 (1222 aa).

The span at 1–12 (MSEEQTAIDSPP) shows a compositional bias: polar residues. The interval 1-59 (MSEEQTAIDSPPSTVEGSVETVTTIDSPSTTASTIAATAEEHPQLEKKPTPLPSLKDLP) is disordered. Residues 13-38 (STVEGSVETVTTIDSPSTTASTIAAT) show a composition bias toward low complexity. Positions 39–49 (AEEHPQLEKKP) are enriched in basic and acidic residues. T50 carries the phosphothreonine modification. Phosphoserine occurs at positions 54, 63, 85, 87, and 89. Residues 79 to 98 (KPAVSNSPSPSPSAPSLTTG) form a disordered region. The KH 1 domain occupies 177-249 (PINAVIEVPS…ESVNLAKAKI (73 aa)). Residue S630 is modified to Phosphoserine. KH domains lie at 634–702 (KSKM…KKYL), 712–771 (IITK…HEEL), 782–851 (GHKM…AKRV), 861–929 (FVTE…VEEI), and 939–1001 (SVTK…EKKI). A Phosphoserine modification is found at S1112. The 64-residue stretch at 1153-1216 (YAGYVWGADT…AGVEKAGEMV (64 aa)) folds into the KH 7 domain.

The protein localises to the endoplasmic reticulum membrane. It is found in the nucleus membrane. Involved in the control of mitotic chromosome transmission. Required during cell division for faithful partitioning of the ER-nuclear envelope membranes which, in S.cerevisiae, enclose the duplicated chromosomes. The sequence is that of Protein SCP160 (SCP160) from Saccharomyces cerevisiae (strain ATCC 204508 / S288c) (Baker's yeast).